We begin with the raw amino-acid sequence, 969 residues long: Translation initiation factor IF-2 (969 aa).

Positions 96–377 are disordered; it reads KRDPAEPVRA…NSRNQHQDRR (282 aa). 3 stretches are compositionally biased toward low complexity: residues 105–157, 167–181, and 216–252; these read AEPA…QAEP, AAPAQAVAEPVEPAK, and PSAPAESPKSAKAEPAAAPKTTAKPGEIRRAAAPAAP. Residues 253–264 show a composition bias toward basic and acidic residues; sequence DRAREEARRAAE. The span at 357–366 shows a compositional bias: gly residues; sequence RAGGKGGRGG. One can recognise a tr-type G domain in the interval 470 to 637; that stretch reads PRAPVVTVMG…NVLLQAEILE (168 aa). Positions 479 to 486 are G1; it reads GHVDHGKT. GTP is bound at residue 479–486; the sequence is GHVDHGKT. The G2 stretch occupies residues 504–508; the sequence is GITQH. Residues 525 to 528 are G3; it reads DTPG. GTP contacts are provided by residues 525 to 529 and 579 to 582; these read DTPGH and NKID. Residues 579-582 form a G4 region; sequence NKID. The G5 stretch occupies residues 615 to 617; it reads SAK.

The protein belongs to the TRAFAC class translation factor GTPase superfamily. Classic translation factor GTPase family. IF-2 subfamily.

It localises to the cytoplasm. In terms of biological role, one of the essential components for the initiation of protein synthesis. Protects formylmethionyl-tRNA from spontaneous hydrolysis and promotes its binding to the 30S ribosomal subunits. Also involved in the hydrolysis of GTP during the formation of the 70S ribosomal complex. The chain is Translation initiation factor IF-2 from Bordetella parapertussis (strain 12822 / ATCC BAA-587 / NCTC 13253).